Consider the following 1897-residue polypeptide: 1,3-beta-glucan synthase component FKS1 (1897 aa).

The interval 1–106 (MSGYPAGHYE…SETFSDFTMR (106 aa)) is disordered. Basic and acidic residues predominate over residues 8-29 (HYEDGYGHQEHGGDAYYQDEHG). Low complexity predominate over residues 74–83 (GDQYYDQGNG). The next 17 helical transmembrane spans lie at 487-507 (IWVIHLGAFWFFTAYNAPTLY), 525-545 (WSAVGFGGALVGLIQILATLC), 564-584 (LMFLIAVFIVNLAPGVVVFGF), 591-611 (TICLIIGIVHFFIALATFFFF), 655-675 (LWICVFGAKLVESYFFLTLSL), 707-727 (ILLGLMMFMDLTLFFLDSYLW), 728-748 (YVICNTIFSVARSFYLGVSIW), 1329-1349 (NMFIMLSVQMFMIVLINLGAL), 1386-1406 (CVVSIFIVFFISFVPLAVQEL), 1473-1493 (FAGPSIYAGSRLLLMLLFATS), 1497-1517 (TPALIWFWVSLLALCISPFLF), 1588-1608 (IFFSEIIAPLVQVAVTLVPYL), 1630-1650 (IAIVAFGPIGVNAGVSGMFFG), 1666-1686 (FGAVLAAIAHAIAVIILLVIF), 1701-1721 (VLGMISAAAIQRFIYKLIISL), 1766-1786 (FSADFVLGHILLFVMLPALCI), and 1826-1846 (FAILYFTMLVLFLILLIAPLV).

Belongs to the glycosyltransferase 48 family. Component of the 1,3-beta-glucan synthase (GS) complex composed of a catalytic subunit fksA and a regulatory subunit.

It is found in the mitochondrion. It localises to the cell membrane. The catalysed reaction is [(1-&gt;3)-beta-D-glucosyl](n) + UDP-alpha-D-glucose = [(1-&gt;3)-beta-D-glucosyl](n+1) + UDP + H(+). Its function is as follows. Catalytic subunit of the 1,3-beta-glucan synthase. Synthesizes 1,3-beta-glucan, a major structural component of the fungal cell wall. Involved in cell wall synthesis, maintenance and remodeling. This is 1,3-beta-glucan synthase component FKS1 from Aspergillus niger (strain ATCC MYA-4892 / CBS 513.88 / FGSC A1513).